We begin with the raw amino-acid sequence, 440 residues long: Discs overgrown protein kinase (440 aa).

Positions 9-277 (YRLGRKIGSG…HLRKLFRNLF (269 aa)) constitute a Protein kinase domain. ATP contacts are provided by residues 15-23 (IGSGSFGDI) and K38. Catalysis depends on D128, which acts as the Proton acceptor. Residues 221-224 (KRQK) form a nuclear localization signal; essential for interaction with Bdbt and important for nuclear localization region. Phosphoserine is present on residues S333 and S334. The segment at 376 to 440 (SQLIGGNGLN…GGGGGVGNAK (65 aa)) is disordered. Residues 413–440 (QGGGGGGGGVGVGGMPSGGGGGGVGNAK) show a composition bias toward gly residues.

This sequence belongs to the protein kinase superfamily. CK1 Ser/Thr protein kinase family. Casein kinase I subfamily. In terms of assembly, forms a complex with per. Interacts with Dlish. Interacts (via nuclear localization signal) with Bdbt. As to expression, detected in the head (at protein level). Expressed in photoreceptor cells of the eyes as well as in the region situated between the optic lobe and the central brain.

It localises to the nucleus. The protein localises to the cytoplasm. Its subcellular location is the cytosol. It catalyses the reaction L-seryl-[protein] + ATP = O-phospho-L-seryl-[protein] + ADP + H(+). The catalysed reaction is L-threonyl-[protein] + ATP = O-phospho-L-threonyl-[protein] + ADP + H(+). Functionally, serine/threonine-protein kinase which is involved in the circadian rhythm pathway, viability and planar cell polarity. In the circadian rhythm pathway, phosphorylates the clock gene period (per) and targets it for degradation in the absence of timeless (tim), thus contributing to production of the circadian oscillations of the clock genes. Together with CkIalpha, regulates processing of ci by phosphorylating it, which promotes its binding to slmb, the F-box recognition component of the SCF(slmb) E3 ubiquitin-protein ligase. Involved in the inhibition of apoptosis during cell proliferation and growth arrest in imaginal disks. Also functions in planar cell polarity. In Drosophila melanogaster (Fruit fly), this protein is Discs overgrown protein kinase (dco).